The following is a 384-amino-acid chain: V-type proton ATPase subunit C 2 (384 aa).

Belongs to the V-ATPase C subunit family. In terms of assembly, V-ATPase is a heteromultimeric enzyme made up of two complexes: the ATP-hydrolytic V1 complex and the proton translocation V0 complex. The V1 complex consists of three catalytic AB heterodimers that form a heterohexamer, three peripheral stalks each consisting of EG heterodimers, one central rotor including subunits D and F, and the regulatory subunits C and H. The proton translocation complex V0 consists of the proton transport subunit a, a ring of proteolipid subunits c9c'', rotary subunit d, subunits e and f, and the accessory subunits vah-19/Ac45 and vah-20/PRR.

Subunit of the V1 complex of vacuolar(H+)-ATPase (V-ATPase), a multisubunit enzyme composed of a peripheral complex (V1) that hydrolyzes ATP and a membrane integral complex (V0) that translocates protons. V-ATPase is responsible for acidifying and maintaining the pH of intracellular compartments and in some cell types, is targeted to the plasma membrane, where it is responsible for acidifying the extracellular environment. Subunit C is necessary for the assembly of the catalytic sector of the enzyme and is likely to have a specific function in its catalytic activity. This chain is V-type proton ATPase subunit C 2 (VATC), found in Ascidia sydneiensis samea (Vanadium-rich ascidian).